Reading from the N-terminus, the 424-residue chain is Homeobox-containing protein 1 (424 aa).

The HNF-p1 domain occupies 1–30 (MLFTIEQLELIKKLQHTGMSSDQLLKAFGE). The region spanning 103–199 (SQRTPMKEIT…PNKLAAFLAD (97 aa)) is the POU-specific atypical domain. A DNA-binding region (homeobox) is located at residues 215–291 (QRRERYVFRP…NKRKELRRRS (77 aa)). The disordered stretch occupies residues 291-345 (SAEASAASTSSASSSASSTANHDSVSVSSMSPRDEETSSRNTTPETAISPSPAVS). The segment covering 293-310 (EASAASTSSASSSASSTA) has biased composition (low complexity). Composition is skewed to polar residues over residues 311-321 (NHDSVSVSSMS) and 329-345 (SRNT…PAVS).

It belongs to the HMBOX1 homeobox family. In terms of tissue distribution, expressed in both AWC neurons. Also expressed in the FLP mechanosensory neurons.

The protein resides in the nucleus. Transcriptional repressor which maintains cell fate asymmetry of AWC neurons in adults by repressing the expression of multiple AWC (OFF) genes, including srsx-3 in the AWC (ON) neuron. The protein is Homeobox-containing protein 1 of Caenorhabditis elegans.